A 482-amino-acid chain; its full sequence is Abscisic acid 8'-hydroxylase 2 (482 aa).

A helical membrane pass occupies residues 20 to 40 (PALITLTIVVVVVVLLFKWWL). Residue cysteine 431 coordinates heme.

It belongs to the cytochrome P450 family. The cofactor is heme. In terms of tissue distribution, mainly expressed in dry seeds. Lower expression in rosette leaves, flowers, siliques and stems. Not expressed in roots. Expressed in both endosperm and vascular tissues of embryo during the seed development and in cortex and endodermis in germinating embryo.

It is found in the membrane. The catalysed reaction is 2-cis-(+)-abscisate + reduced [NADPH--hemoprotein reductase] + O2 = (+)-8'-hydroxyabscisate + oxidized [NADPH--hemoprotein reductase] + H2O + H(+). It participates in plant hormone degradation; abscisic acid degradation. In terms of biological role, involved in the oxidative degradation of abscisic acid, but not in the isomerization of the produced 8'-hydroxyabscisic acid (8'-OH-ABA) to (-)-phaseic acid (PA). Involved in the control of seed dormancy and germination. This chain is Abscisic acid 8'-hydroxylase 2 (CYP707A2), found in Arabidopsis thaliana (Mouse-ear cress).